The following is a 427-amino-acid chain: Trigger factor (427 aa).

Residues 163–248 (GDTVILDFEG…LHEIKTKEVP (86 aa)) enclose the PPIase FKBP-type domain.

The protein belongs to the FKBP-type PPIase family. Tig subfamily.

Its subcellular location is the cytoplasm. The enzyme catalyses [protein]-peptidylproline (omega=180) = [protein]-peptidylproline (omega=0). Involved in protein export. Acts as a chaperone by maintaining the newly synthesized protein in an open conformation. Functions as a peptidyl-prolyl cis-trans isomerase. This is Trigger factor from Listeria monocytogenes serotype 4b (strain CLIP80459).